The chain runs to 147 residues: Large ribosomal subunit protein uL22 (147 aa).

The disordered stretch occupies residues 110-147 (EEKKTVAKKAPAAKKTTTTKAPAKKTTSTKKATAKKES). The segment covering 117 to 140 (KKAPAAKKTTTTKAPAKKTTSTKK) has biased composition (low complexity).

It belongs to the universal ribosomal protein uL22 family. Part of the 50S ribosomal subunit.

Its function is as follows. This protein binds specifically to 23S rRNA; its binding is stimulated by other ribosomal proteins, e.g. L4, L17, and L20. It is important during the early stages of 50S assembly. It makes multiple contacts with different domains of the 23S rRNA in the assembled 50S subunit and ribosome. In terms of biological role, the globular domain of the protein is located near the polypeptide exit tunnel on the outside of the subunit, while an extended beta-hairpin is found that lines the wall of the exit tunnel in the center of the 70S ribosome. This is Large ribosomal subunit protein uL22 from Campylobacter jejuni subsp. jejuni serotype O:6 (strain 81116 / NCTC 11828).